Here is a 220-residue protein sequence, read N- to C-terminus: Response regulator ArlR (220 aa).

One can recognise a Response regulatory domain in the interval lysine 3–leucine 116. Aspartate 52 is modified (4-aspartylphosphate). Residues lysine 122 to glutamine 220 constitute a DNA-binding region (ompR/PhoB-type).

In terms of processing, phosphorylated by ArlS.

The protein localises to the cytoplasm. Member of the two-component regulatory system ArlS/ArlR. This chain is Response regulator ArlR (arlR), found in Staphylococcus saprophyticus subsp. saprophyticus (strain ATCC 15305 / DSM 20229 / NCIMB 8711 / NCTC 7292 / S-41).